The sequence spans 280 residues: Antiactivator FleN (280 aa).

ATP-binding positions include 19–26, E153, N181, 215–217, and R221; these read KGGVGKTN and PYD.

This sequence belongs to the ParA family. As to quaternary structure, forms homodimers. Interacts with FleQ.

ATP-binding allows dimerization and subsequent antagonistic effect against FleQ. Functionally, ATPase that plays an important role in maintaining flagellar number in Pseudomonas aeruginosa. Exhibits anti-activator activity against FleQ, the global transcriptional regulator of flagellar genes. The polypeptide is Antiactivator FleN (Pseudomonas aeruginosa (strain ATCC 15692 / DSM 22644 / CIP 104116 / JCM 14847 / LMG 12228 / 1C / PRS 101 / PAO1)).